The primary structure comprises 618 residues: 1-deoxy-D-xylulose-5-phosphate synthase (618 aa).

Thiamine diphosphate is bound by residues H70 and 111 to 113 (GHS). D142 is a binding site for Mg(2+). Thiamine diphosphate-binding positions include 143-144 (GS), N171, Y278, and E360. N171 contributes to the Mg(2+) binding site.

The protein belongs to the transketolase family. DXPS subfamily. Homodimer. Mg(2+) is required as a cofactor. The cofactor is thiamine diphosphate.

It carries out the reaction D-glyceraldehyde 3-phosphate + pyruvate + H(+) = 1-deoxy-D-xylulose 5-phosphate + CO2. The protein operates within metabolic intermediate biosynthesis; 1-deoxy-D-xylulose 5-phosphate biosynthesis; 1-deoxy-D-xylulose 5-phosphate from D-glyceraldehyde 3-phosphate and pyruvate: step 1/1. Its function is as follows. Catalyzes the acyloin condensation reaction between C atoms 2 and 3 of pyruvate and glyceraldehyde 3-phosphate to yield 1-deoxy-D-xylulose-5-phosphate (DXP). In Helicobacter pylori (strain J99 / ATCC 700824) (Campylobacter pylori J99), this protein is 1-deoxy-D-xylulose-5-phosphate synthase.